The sequence spans 527 residues: Ribonuclease Y 2 (527 aa).

Residues 2–22 (IAMIATAIIGIVAGGGLGWAL) traverse the membrane as a helical segment. One can recognise an HD domain in the interval 339–432 (QYFHCGEVGW…VIAADAVSGA (94 aa)).

It belongs to the RNase Y family.

It is found in the cell membrane. Endoribonuclease that initiates mRNA decay. This is Ribonuclease Y 2 from Bdellovibrio bacteriovorus (strain ATCC 15356 / DSM 50701 / NCIMB 9529 / HD100).